Reading from the N-terminus, the 210-residue chain is Large ribosomal subunit protein uL3 (210 aa).

The protein belongs to the universal ribosomal protein uL3 family. In terms of assembly, part of the 50S ribosomal subunit. Forms a cluster with proteins L14 and L19.

In terms of biological role, one of the primary rRNA binding proteins, it binds directly near the 3'-end of the 23S rRNA, where it nucleates assembly of the 50S subunit. This is Large ribosomal subunit protein uL3 from Geobacter sulfurreducens (strain ATCC 51573 / DSM 12127 / PCA).